The following is a 456-amino-acid chain: Peptide chain release factor PrfB1, chloroplastic (456 aa).

Residues 1 to 58 constitute a chloroplast transit peptide; sequence MSMELTVLGPLAGRSFAIAGKPKLLLLRPTNLPLLRLSLPLSLPNFSSSSRFNSPIVF.

This sequence belongs to the prokaryotic/mitochondrial release factor family. Expressed in leaves, stems and flowers.

It is found in the plastid. The protein localises to the chloroplast stroma. Directs the termination of translation in response to the peptide chain termination codon UGA. Required for the proper translation, stability and normal processing of UGA-containing polycistronic transcripts in chloroplasts. This Arabidopsis thaliana (Mouse-ear cress) protein is Peptide chain release factor PrfB1, chloroplastic.